The sequence spans 68 residues: MGSLSIWHWLIVLLIVVLVFGTKKLPGIGKDLGNAVKGFKEGMNEGAKDGQPPAKDAGRIIDGEADKK.

Residues 1 to 21 traverse the membrane as a helical segment; that stretch reads MGSLSIWHWLIVLLIVVLVFG. The interval 42 to 68 is disordered; the sequence is GMNEGAKDGQPPAKDAGRIIDGEADKK. A compositionally biased stretch (basic and acidic residues) spans 56–68; the sequence is DAGRIIDGEADKK.

It belongs to the TatA/E family. As to quaternary structure, the Tat system comprises two distinct complexes: a TatABC complex, containing multiple copies of TatA, TatB and TatC subunits, and a separate TatA complex, containing only TatA subunits. Substrates initially bind to the TatABC complex, which probably triggers association of the separate TatA complex to form the active translocon.

The protein localises to the cell inner membrane. Part of the twin-arginine translocation (Tat) system that transports large folded proteins containing a characteristic twin-arginine motif in their signal peptide across membranes. TatA could form the protein-conducting channel of the Tat system. The chain is Sec-independent protein translocase protein TatA from Chromobacterium violaceum (strain ATCC 12472 / DSM 30191 / JCM 1249 / CCUG 213 / NBRC 12614 / NCIMB 9131 / NCTC 9757 / MK).